Reading from the N-terminus, the 129-residue chain is Small ribosomal subunit protein bS6 (129 aa).

The tract at residues 100-129 (SIMLKQKEERAPRREERSEAKPEAKSEAAE) is disordered. Residues 104-129 (KQKEERAPRREERSEAKPEAKSEAAE) are compositionally biased toward basic and acidic residues.

It belongs to the bacterial ribosomal protein bS6 family.

Functionally, binds together with bS18 to 16S ribosomal RNA. The sequence is that of Small ribosomal subunit protein bS6 from Vibrio parahaemolyticus serotype O3:K6 (strain RIMD 2210633).